The chain runs to 450 residues: Keratin, type I cytoskeletal 25 (450 aa).

Residues 1-24 form a disordered region; that stretch reads MSLRLPSGSRRAGPRPTTGSLRLS. The segment at 1-78 is head; sequence MSLRLPSGSR…MNEGGLLSGN (78 aa). Residues 79-114 are coil 1A; that stretch reads EKVTMQNLNDRLASYLENVRALEEANADLEQKIKGW. Positions 79 to 394 constitute an IF rod domain; the sequence is EKVTMQNLND…LLIGGDDGAC (316 aa). The linker 1 stretch occupies residues 115–136; it reads YEKFGPGSCRGLDHDYSRYLPI. The coil 1B stretch occupies residues 137–228; the sequence is IEDLKNQIIA…KNHKEEMQVL (92 aa). The tract at residues 229–251 is linker 12; sequence QCAAGGNVNVEMNAAPGVDLTVL. The tract at residues 252-390 is coil 2; that stretch reads LNNMRAEYEA…ETYCLLIGGD (139 aa). A tail region spans residues 391-450; the sequence is DGACKSGGYKSKDYAAGNMGNQMKDPIRAIVVKKVLEEVDQRSKVLTTRLHSLEEKSQSN. Phosphoserine is present on Ser-442.

It belongs to the intermediate filament family. In terms of assembly, heterodimer of a type I and a type II keratin. Heterodimer with type II keratin KRT5 leading to the formation of keratin intermediate filament (KIF) network. Interacts with KRT6A to form filaments. In terms of tissue distribution, expressed in skin and wool follicle. Expression localized to the inner root sheath of wool follicle.

The protein resides in the cytoplasm. Functionally, essential for the proper assembly of type I and type II keratin protein complexes and formation of keratin intermediate filaments in the inner root sheath (irs). Plays a role in the cytoskeleton organization. In Ovis aries (Sheep), this protein is Keratin, type I cytoskeletal 25.